The sequence spans 473 residues: Glutamyl-tRNA reductase (473 aa).

Substrate contacts are provided by residues 49 to 52, S109, 114 to 116, and Q120; these read TCNR and ESQ. The active-site Nucleophile is the C50. The segment at 196–215 is disordered; sequence LDGGGVAAEGPRHAVTPEPP. 226–231 is an NADP(+) binding site; the sequence is GAGAVG.

The protein belongs to the glutamyl-tRNA reductase family. In terms of assembly, homodimer.

It catalyses the reaction (S)-4-amino-5-oxopentanoate + tRNA(Glu) + NADP(+) = L-glutamyl-tRNA(Glu) + NADPH + H(+). It functions in the pathway porphyrin-containing compound metabolism; protoporphyrin-IX biosynthesis; 5-aminolevulinate from L-glutamyl-tRNA(Glu): step 1/2. In terms of biological role, catalyzes the NADPH-dependent reduction of glutamyl-tRNA(Glu) to glutamate 1-semialdehyde (GSA). This is Glutamyl-tRNA reductase from Frankia casuarinae (strain DSM 45818 / CECT 9043 / HFP020203 / CcI3).